The following is a 580-amino-acid chain: uncharacterized protein (580 aa).

Disordered regions lie at residues 161-241 (SFSP…SVND), 256-281 (LGSLSTNTSSTAQKNKSRKPTKSFSD), 325-345 (NVSHEEKSHSVQDDKSKQLLK), 472-495 (PRDTDIKATPNLSQSGNINSDNSD), and 544-564 (SAVLRRQSSQSSGANDDKEVR). Low complexity predominate over residues 192–203 (SNSNSSDTSTDD). Polar residues-rich tracts occupy residues 223–241 (THSSAPPLNQQKSSTSVND) and 256–269 (LGSLSTNTSSTAQK). Residues 326–341 (VSHEEKSHSVQDDKSK) show a composition bias toward basic and acidic residues. Polar residues predominate over residues 481–495 (PNLSQSGNINSDNSD).

This is an uncharacterized protein from Schizosaccharomyces pombe (strain 972 / ATCC 24843) (Fission yeast).